The chain runs to 392 residues: Heat-inducible transcription repressor HrcA (392 aa).

This sequence belongs to the HrcA family.

Its function is as follows. Negative regulator of class I heat shock genes (grpE-dnaK-dnaJ and groELS operons). Prevents heat-shock induction of these operons. The protein is Heat-inducible transcription repressor HrcA of Chlamydia trachomatis serovar A (strain ATCC VR-571B / DSM 19440 / HAR-13).